We begin with the raw amino-acid sequence, 92 residues long: Serine rich endogenous peptide 11 (92 aa).

An N-terminal signal peptide occupies residues 1–29; sequence MENNTFSSKSINLLILLLLLCTFLCQTES. The disordered stretch occupies residues 50–92; that stretch reads PNTDIGTPSSTSDRGGGGNGRRLMSQMDVGASSSGQGGGRNRH. The span at 53 to 62 shows a compositional bias: polar residues; the sequence is DIGTPSSTSD. 2 consecutive short sequence motifs (SCOOP motif) follow at residues 53–67 and 75–89; these read DIGT…GGGG and QMDV…GGGR. Short sequence motifs (sxS motif essential for MIK2 binding) lie at residues 59-61 and 81-83; these read STS and SSS.

This sequence belongs to the serine rich endogenous peptide (SCOOP) phytocytokine family. Interacts with MIK2 (via extracellular leucine-rich repeat domain); this interaction triggers the formation of complex between MIK2 and the BAK1/SERK3 and SERK4 coreceptors, and subsequent BAK1 activation by phosphorylation. In terms of tissue distribution, mostly expressed in seedlings shoots and roots, and, to a lower extent, in leaves.

It is found in the cell membrane. Its subcellular location is the secreted. The protein resides in the extracellular space. The protein localises to the apoplast. In terms of biological role, brassicaceae-specific phytocytokine (plant endogenous peptide released into the apoplast) perceived by MIK2 in a BAK1/SERK3 and SERK4 coreceptors-dependent manner, that modulates various physiological and antimicrobial processes including growth prevention and reactive oxygen species (ROS) response regulation. The sequence is that of Serine rich endogenous peptide 11 from Arabidopsis thaliana (Mouse-ear cress).